A 457-amino-acid chain; its full sequence is Nuclear hormone receptor family member odr-7 (457 aa).

Disordered stretches follow at residues 57 to 95 and 230 to 252; these read EQPNNNVPQQPWGPFPPAFGGRPSGEQTDGNPGEFDNDA and KQESSDDSTLKNLKKSDQQLQQP. Residues 327–407 constitute a DNA-binding region (nuclear receptor); it reads LHDCQVCLST…IGMLPENVQH (81 aa). NR C4-type zinc fingers lie at residues 330 to 351 and 367 to 395; these read CQVCLSTHANGLHFGARTCAAC and CKRNQRCNNASRDGTGYRKICRSCRMKRC. The tract at residues 435 to 457 is disordered; the sequence is QPSGSAAQPITVSSSESPRHTTN.

This sequence belongs to the nuclear hormone receptor family. NR0 subfamily. In terms of assembly, heterodimer with a partner that confers DNA binding capacity or a nuclear hormone receptor whose DNA binding it inhibits. Expressed predominantly in the AWA neurons.

The protein localises to the nucleus. It localises to the cytoplasm. The protein resides in the perinuclear region. Its function is as follows. Required for the function of one pair of chemosensory neurons called AWA neurons that are involved in chemotaxis to volatile odorants. Acts in a pathway that specifies olfactory neuronal fate. Regulates the transcription of olfactory signaling molecules such as odr-10 that specify AWA neuron identity and function. Represses the expression in AWA neurons of factors such as str-2 which specify AWC neuron identity. The sequence is that of Nuclear hormone receptor family member odr-7 (odr-7) from Caenorhabditis elegans.